The primary structure comprises 264 residues: Short-chain dehydrogenase/reductase malC (264 aa).

A helical membrane pass occupies residues 13 to 35; the sequence is GKNVLIIGGTSGIGFAVAQLVIE. NADP(+) is bound by residues threonine 22, serine 23, isoleucine 25, serine 45, asparagine 46, lysine 49, aspartate 75, asparagine 88, arginine 130, valine 202, and threonine 204. A glycan (N-linked (GlcNAc...) asparagine) is linked at asparagine 249.

This sequence belongs to the short-chain dehydrogenases/reductases (SDR) family.

The protein resides in the membrane. It carries out the reaction 1-hydroxy-3-{[2-(1,1-dimethylallyl)-indol-3-yl]methyl}-6H,7H,8H-5lambda(5)-pyrrolo[1,2-a]pyrazine + NADPH + H(+) = 1-hydroxy-3-{[2-(1,1-dimethylallyl)-indol-3-yl]methyl}-4H,6H,7H,8H-pyrrolo[1,2-a]pyrazine + NADP(+). The enzyme catalyses 1-hydroxy-3-{[2-(1,1-dimethylallyl)-indol-3-yl]methyl}-4H,6H,7H,8H-pyrrolo[1,2-a]pyrazine = (+)-premalbrancheamide. It participates in alkaloid biosynthesis. Short-chain dehydrogenase/reductase; part of the gene cluster that mediates the biosynthesis of malbrancheamide, a dichlorinated fungal indole alkaloid that belongs to a family of natural products containing a characteristic bicyclo[2.2.2]diazaoctane core. The first step of malbrancheamide biosynthesis involves coupling of L-proline and L-tryptophan by malG, a bimodular NRPS, to produce L-Pro-L-Trp aldehyde through reductive offloading. This compound undergoes spontaneous cyclization and dehydration to give a dienamine which is reverse prenylated at C-2 by malE. The other prenyltransferase present in the cluster, malB, displays modest activity, suggesting that may be a redundant gene in the pathway. Subsequently, a [4+2] Diels-Alder cyclo-addition catalyzed by the bifunctional enzyme malC forms the characteristic bicyclo[2.2.2]diazaoctane ring of premalbrancheamid. The first reaction catalyzed is a NADPH-dependent reduction reaction in which the nicotinamide cofactor is a stoichiometric reagent. Either NADH or NADPH is effective as a cofactor. NADP(+) is required for stereocontrolled formation of premalbrancheamide, however it does not appear to be required as a formal stoichiometric reagent because the second reaction performed by malC, the [4+2] cycloaddition, is a balanced chemical reaction without requirement for hydride transfer to balance the reaction. Finally, the flavin-dependent halogenase malA catalyzes the iterative dichlorination of the indole ring of premalbrancheamide to yield C-9 monochlorinated malbrancheamide B, C-8 monochlorinated isomalbrancheamide B, and dichlorinated malbrancheamide. MalA is also able to brominate premalbrancheamide at C-9 to yield malbrancheamide C, and, to a lesser extend, at C-8 to yield isomalbrancheamide C. Finally, malA can brominate C-9 monochlorinated malbrancheamide B at C-8 to yield malbrancheamide D, or C-8 monochlorinated isomalbrancheamide B at C-9 to produce isomalbrancheamide D. The sequence is that of Short-chain dehydrogenase/reductase malC from Malbranchea aurantiaca.